A 321-amino-acid polypeptide reads, in one-letter code: Degreening-related gene dee76 protein (321 aa).

Belongs to the Mo25 family.

The polypeptide is Degreening-related gene dee76 protein (DEE76) (Auxenochlorella protothecoides (Green microalga)).